A 142-amino-acid polypeptide reads, in one-letter code: Transcription antitermination protein NusB (142 aa).

The protein belongs to the NusB family.

Involved in transcription antitermination. Required for transcription of ribosomal RNA (rRNA) genes. Binds specifically to the boxA antiterminator sequence of the ribosomal RNA (rrn) operons. In Roseiflexus sp. (strain RS-1), this protein is Transcription antitermination protein NusB.